Reading from the N-terminus, the 349-residue chain is GMP reductase (349 aa).

Residue 108–131 participates in NADP(+) binding; it reads LDFFKIKKIFSLSSELKYICIDVA. G181 and G183 together coordinate K(+). Residue C186 is the Thioimidate intermediate of the active site. Position 216-239 (216-239) interacts with NADP(+); the sequence is IISDGGCTVSGDIAKAFGGGADFV.

It belongs to the IMPDH/GMPR family. GuaC type 1 subfamily. In terms of assembly, homotetramer.

The catalysed reaction is IMP + NH4(+) + NADP(+) = GMP + NADPH + 2 H(+). Functionally, catalyzes the irreversible NADPH-dependent deamination of GMP to IMP. It functions in the conversion of nucleobase, nucleoside and nucleotide derivatives of G to A nucleotides, and in maintaining the intracellular balance of A and G nucleotides. The chain is GMP reductase from Buchnera aphidicola subsp. Schizaphis graminum (strain Sg).